We begin with the raw amino-acid sequence, 566 residues long: DBIRD complex subunit ZNF326 (566 aa).

Disordered regions lie at residues His19 to Asp81 and Arg145 to Thr180. Positions Ser59 to Arg73 are enriched in gly residues. A compositionally biased stretch (low complexity) spans Ser156–Ser165. The Bipartite nuclear localization signal motif lies at Lys240–Lys263. Positions Phe314–Glu347 are disordered. The segment covering Ser317 to Arg335 has biased composition (basic and acidic residues). 2 C2H2 AKAP95-type zinc fingers span residues Cys359–His381 and Cys452–His475. Residues Pro516 to Asn566 form a disordered region. Over residues Gln527–Thr556 the composition is skewed to acidic residues.

Belongs to the AKAP95 family. Component of the DBIRD complex.

Its subcellular location is the nucleus. In terms of biological role, core component of the DBIRD complex, a multiprotein complex that acts at the interface between core mRNP particles and RNA polymerase II (RNAPII) and integrates transcript elongation with the regulation of alternative splicing. In Gallus gallus (Chicken), this protein is DBIRD complex subunit ZNF326 (ZNF326).